The sequence spans 149 residues: MSTQSRILILNGPNLNLLGLREPAHYGSQNLEQIVNALTIQATALNVELEHLQSNREYELIEAIHNAYQRIDFIIINPAAFTHTSVALRDALLGVDIPFIEVHLSNVHAREPFRHHSYLSDKAVGVICGLGADGYEFALKAAVKRLRSN.

Residue Tyr-26 is the Proton acceptor of the active site. The substrate site is built by Asn-77, His-83, and Asp-90. The active-site Proton donor is His-103. Residues 104–105 and Arg-114 each bind substrate; that span reads LS.

It belongs to the type-II 3-dehydroquinase family. Homododecamer.

It catalyses the reaction 3-dehydroquinate = 3-dehydroshikimate + H2O. It functions in the pathway metabolic intermediate biosynthesis; chorismate biosynthesis; chorismate from D-erythrose 4-phosphate and phosphoenolpyruvate: step 3/7. Its function is as follows. Catalyzes a trans-dehydration via an enolate intermediate. This is 3-dehydroquinate dehydratase from Aliivibrio salmonicida (strain LFI1238) (Vibrio salmonicida (strain LFI1238)).